Here is a 594-residue protein sequence, read N- to C-terminus: Type I restriction enzyme EcoEI specificity subunit (594 aa).

Belongs to the type-I restriction system S methylase family. The type I restriction/modification system is composed of three polypeptides R, M and S; the restriction enzyme has stoichiometry R(2)M(2)S(1) while the methyltransferase is M(2)S(1).

The specificity (S) subunit of a type I restriction enzyme; this subunit dictates DNA sequence specificity. The M and S subunits together form a methyltransferase (MTase) that methylates two adenine residues of the sequence 5'-GAGN(7)ATGC-3'. In the presence of the R subunit the complex can also act as an endonuclease, binding to the same target sequence but cutting the DNA some distance from this site. Whether the DNA is cut or modified depends on the methylation state of the target sequence. When the target site is unmodified, the DNA is cut. When the target site is hemimethylated, the complex acts as a maintenance MTase modifying the DNA so that both strands become methylated. After locating a non-methylated recognition site, the enzyme complex serves as a molecular motor that translocates DNA in an ATP-dependent manner until a collision occurs that triggers cleavage. In Escherichia coli, this protein is Type I restriction enzyme EcoEI specificity subunit.